A 373-amino-acid chain; its full sequence is Ribonuclease D (373 aa).

The 3'-5' exonuclease domain maps to 3–171 (YQLITTDAGL…MAKRLVQETE (169 aa)). Positions 210–289 (RPRQLGCLQK…AEAAELEESA (80 aa)) constitute an HRDC domain.

The protein belongs to the RNase D family. A divalent metal cation serves as cofactor.

The protein localises to the cytoplasm. It catalyses the reaction Exonucleolytic cleavage that removes extra residues from the 3'-terminus of tRNA to produce 5'-mononucleotides.. Functionally, exonuclease involved in the 3' processing of various precursor tRNAs. Initiates hydrolysis at the 3'-terminus of an RNA molecule and releases 5'-mononucleotides. This chain is Ribonuclease D, found in Serratia proteamaculans (strain 568).